The following is a 639-amino-acid chain: tRNA (uracil(54)-C(5))-methyltransferase (639 aa).

Positions 78–113 are disordered; sequence VPPTMKHTVDNKRLSSPLTDSGNRRTKKPKLRKYKA. Residues Ser92 and Ser93 each carry the phosphoserine modification. Residues 101–113 show a composition bias toward basic residues; it reads RRTKKPKLRKYKA. Residues 163 to 228 form the TRAM domain; the sequence is LQYHREVKNV…PYYVESDLLD (66 aa). Positions 461, 496, 517, and 564 each coordinate S-adenosyl-L-methionine. Cys591 acts as the Nucleophile in catalysis. The active-site Proton acceptor is the Glu631.

This sequence belongs to the class I-like SAM-binding methyltransferase superfamily. RNA M5U methyltransferase family.

The catalysed reaction is uridine(54) in tRNA + S-adenosyl-L-methionine = 5-methyluridine(54) in tRNA + S-adenosyl-L-homocysteine + H(+). Functionally, catalyzes the formation of 5-methyl-uridine at position 54 (m5U54) in all tRNA. May also have a role in tRNA stabilization or maturation. This is tRNA (uracil(54)-C(5))-methyltransferase (TRM2) from Saccharomyces cerevisiae (strain ATCC 204508 / S288c) (Baker's yeast).